A 316-amino-acid chain; its full sequence is Na(+)-translocating NADH-quinone reductase subunit C (316 aa).

Residues 13–33 (WYIILFIFVLSLIAGTLLSSV) traverse the membrane as a helical segment. Position 280 is an FMN phosphoryl threonine (threonine 280).

Belongs to the NqrC family. Composed of six subunits; NqrA, NqrB, NqrC, NqrD, NqrE and NqrF. Requires FMN as cofactor.

The protein localises to the cell inner membrane. It catalyses the reaction a ubiquinone + n Na(+)(in) + NADH + H(+) = a ubiquinol + n Na(+)(out) + NAD(+). In terms of biological role, NQR complex catalyzes the reduction of ubiquinone-1 to ubiquinol by two successive reactions, coupled with the transport of Na(+) ions from the cytoplasm to the periplasm. NqrA to NqrE are probably involved in the second step, the conversion of ubisemiquinone to ubiquinol. This is Na(+)-translocating NADH-quinone reductase subunit C from Chlamydia trachomatis serovar D (strain ATCC VR-885 / DSM 19411 / UW-3/Cx).